A 688-amino-acid chain; its full sequence is ERI1 exoribonuclease 2 (688 aa).

Residues leucine 37–alanine 226 form the Exonuclease domain. 3 residues coordinate Mg(2+): aspartate 41, glutamate 43, and aspartate 156. Glutamate 43 serves as the catalytic Proton acceptor. Glutamate 43 is a binding site for AMP. Histidine 213 acts as the Proton acceptor in catalysis. Histidine 213 is a binding site for AMP. Aspartate 218 provides a ligand contact to Mg(2+). The segment covering valine 337–leucine 360 has biased composition (polar residues). Disordered stretches follow at residues valine 337–lysine 367 and aspartate 523–glutamine 546. Zn(2+) is bound by residues cysteine 594, cysteine 596, cysteine 619, and cysteine 631. The GRF-type zinc finger occupies cysteine 594 to leucine 640.

Belongs to the ERI2 family. Mg(2+) is required as a cofactor.

The sequence is that of ERI1 exoribonuclease 2 (Eri2) from Mus musculus (Mouse).